The chain runs to 206 residues: Phosphatidyl-N-methylethanolamine N-methyltransferase (206 aa).

The Lumenal portion of the chain corresponds to 1 to 20 (MKESVQEIIQQLIHSVDLQS). The segment at residues 21 to 41 (SKFQLAIVCTMFNPIFWNIVA) is an intramembrane region (helical). At 42–53 (RMEYHKHSLTKM) the chain is on the lumenal side. The chain crosses the membrane as a helical span at residues 54–74 (CGGARKGCYMLAATIFSLGIV). Over 75–101 (RDMVYESALREQPTCSLITGENWTKLG) the chain is Cytoplasmic. Residues 102 to 122 (VALFGLGQVLVLSSMYKLGIT) form a helical membrane-spanning segment. An S-adenosyl-L-methionine-binding site is contributed by 106–108 (GLG). The Lumenal portion of the chain corresponds to 123-165 (GTYLGDYFGILMDERVTGFPFNVSNNPMYQGSTLSFLGIALYK). A helical transmembrane segment spans residues 166-186 (GKPAGLVVSAVVYFMYKIALR). Residues 187 to 206 (WEEPFTAMIYANRDKAKKNM) are Cytoplasmic-facing. An S-adenosyl-L-methionine-binding site is contributed by 188–189 (EE).

Belongs to the class VI-like SAM-binding methyltransferase superfamily. PEMT/PEM2 methyltransferase family.

It localises to the endoplasmic reticulum membrane. Its subcellular location is the mitochondrion membrane. The catalysed reaction is a 1,2-diacyl-sn-glycero-3-phosphoethanolamine + S-adenosyl-L-methionine = a 1,2-diacyl-sn-glycero-3-phospho-N-methylethanolamine + S-adenosyl-L-homocysteine + H(+). It carries out the reaction a 1,2-diacyl-sn-glycero-3-phospho-N-methylethanolamine + S-adenosyl-L-methionine = a 1,2-diacyl-sn-glycero-3-phospho-N,N-dimethylethanolamine + S-adenosyl-L-homocysteine + H(+). The enzyme catalyses a 1,2-diacyl-sn-glycero-3-phospho-N,N-dimethylethanolamine + S-adenosyl-L-methionine = a 1,2-diacyl-sn-glycero-3-phosphocholine + S-adenosyl-L-homocysteine + H(+). Its pathway is phospholipid metabolism; phosphatidylcholine biosynthesis. Catalyzes the second two steps of the methylation pathway of phosphatidylcholine biosynthesis, the SAM-dependent methylation of phosphatidylmonomethylethanolamine (PMME) to phosphatidyldimethylethanolamine (PDME) and of PDME to phosphatidylcholine (PC). Can also catalyze the first methylation reaction of PE to PMME in the absence of PE methyltransferase CHO2. In Saccharomyces cerevisiae (strain ATCC 204508 / S288c) (Baker's yeast), this protein is Phosphatidyl-N-methylethanolamine N-methyltransferase.